Reading from the N-terminus, the 572-residue chain is Transducin-like enhancer protein 6 (572 aa).

Disordered stretches follow at residues 1-30 (MTSRDQPRPKGPPKSTSPCPGISNSESSPT), 92-121 (QSEEVSPAEPASPGTPQQVKDKTLQESSFE), and 174-236 (KAKP…VQEP). A compositionally biased stretch (polar residues) spans 14-30 (KSTSPCPGISNSESSPT). WD repeat units lie at residues 284–322 (AHGELVLATAISSFTRHVFTCGRRGIKVWSLTGQVAEDR), 332–372 (TPGA…LHVK), 377–416 (CAGLNCQALDANLDANLAFASFTSGVVRIWDLRDQSVVRD), 419–456 (GYPDGVKSIVVKGYNIWTGGPDACLRCWDQRTIMKPLE), 458–497 (QFKSQIMSLSHSPQEDWVLLGMANGQQWLQSTSGSQRHMV), 499–538 (QKDSVILSVKFSPFGQWWASVGMDDFLGVYSMPAGTKVFE), and 540–571 (PEMSPVTCCDVSSNNRLVVTGSGEHASVYQIT). Residue Ser510 is modified to Phosphoserine; by PKA.

It belongs to the WD repeat Groucho/TLE family. Homodimers. Component of the subcortical maternal complex (SCMC), at least composed of NLRP5, KHDC3, OOEP, and TLE6. Within the complex, interacts with NLRP5, KHDC3 and OOEP. The SCMC may facilitate translocation of its components between the nuclear and cytoplasmic compartments. As part of the SCMC interacts with the SCMC-associated protein ZBED3. As part of the SCMC interacts with the SCMC-associated protein NLRP4F. As part of the SCMC interacts with the SCMC-associated protein CFL1/Cofilin-1. Interacts with FOXG1/BF-1; the interaction inhibits TLE1 interaction with FOXG1/BF-1. Interacts with NFATC1. Interacts with PAX6. In terms of assembly, component of the subcortical maternal complex (SCMC), at least composed of NLRP5, KHDC3L, OOEP, and TLE6 isoform 1. Within the complex, interacts with NLRP5, KHDC3L and OOEP. The SCMC may facilitate translocation of its components between the nuclear and cytoplasmic compartments.

Its subcellular location is the cytoplasm. It localises to the nucleus. Functionally, component of the subcortical maternal complex (SCMC), a multiprotein complex that plays a key role in early embryonic development. The SCMC complex is a structural constituent of cytoplasmic lattices, which consist in fibrous structures found in the cytoplasm of oocytes and preimplantation embryos. They are required to store maternal proteins critical for embryonic development, such as proteins that control epigenetic reprogramming of the preimplantation embryo, and prevent their degradation or activation. Also required for spermatogenesis: regulates spermatogonia proliferation and cell cycle progression, potentially via regulation of cell cycle regulatory genes such as; CEBPB, CEBPA, CSF3, PCNA, and CDK4. Suppresses FOXG1/BF-1-mediated transcriptional repression by inhibiting interaction of the transcriptional corepressor TLE1 with FOXG1 which promotes cortical neuron differentiation. Acts as a transcriptional corepressor of NFATC1-mediated gene expression by contributing to PAX6-mediated repression. Component of the subcortical maternal complex (SCMC), a multiprotein complex that plays a key role in early embryonic development. The chain is Transducin-like enhancer protein 6 from Homo sapiens (Human).